We begin with the raw amino-acid sequence, 186 residues long: ADP-ribosylation factor-like protein 8B (186 aa).

Positions 1–19 (MLALISRLLDWFRSLFWKE) form an intramembrane region, note=Mediates targeting to membranes. GTP contacts are provided by residues 29–35 (QYSGKTT), 71–75 (DIGGQ), and 130–133 (NKRD). Lysine 141 participates in a covalent cross-link: Glycyl lysine isopeptide (Lys-Gly) (interchain with G-Cter in ubiquitin).

Belongs to the small GTPase superfamily. Arf family. As to quaternary structure, interacts with tubulin. Interacts with BORCS5; recruits ARL8B to lysosomes. Interacts with VPS41; the interaction mediates the recruitment of the HOPS complex to lysosomes. Interacts (GTP-bound form) with PLEKHM2 (via RUN domain); the interaction is required to recruit the motor protein kinesin-1 on lysosomes. Interacts (GTP-bound form) with PLEKHM1 (via RUN domain); the interaction is required for PLEKHM1 localization to lysosomes and for ARL8B function in delivery and degradation of endocytic and autophagic cargo in lysosomes. PLEKHM1 and PLEKHM2 compete for interaction with ARL8B. Interacts (GTP-bound form) with RUFY1; the interaction is required for RUFY1 endosomal location. When GTP-bound, interacts with RUFY3 and RUFY4, but not with RUFY1, nor RUFY2. Ubiquitinated at Lys-141 by RNF167, leading to its degradation.

Its subcellular location is the late endosome membrane. The protein resides in the lysosome membrane. It localises to the cytoplasm. The protein localises to the cytoskeleton. It is found in the spindle. Its subcellular location is the cell projection. The protein resides in the axon. It localises to the synapse. The protein localises to the cytolytic granule membrane. It is found in the early endosome membrane. It carries out the reaction GTP + H2O = GDP + phosphate + H(+). Small GTPase which cycles between active GTP-bound and inactive GDP-bound states. In its active state, binds to a variety of effector proteins playing a key role in the regulation of lysosomal positioning which is important for nutrient sensing, natural killer cell-mediated cytotoxicity and antigen presentation. Along with its effectors, orchestrates lysosomal transport and fusion. Localizes specifically to lysosomal membranes and mediates anterograde lysosomal motility by recruiting PLEKHM2, which in turn recruits the motor protein kinesin-1 on lysosomes. Required for lysosomal and cytolytic granule exocytosis. Critical factor involved in NK cell-mediated cytotoxicity. Drives the polarization of cytolytic granules and microtubule-organizing centers (MTOCs) toward the immune synapse between effector NK lymphocytes and target cells. In neurons, mediates the anterograde axonal long-range transport of presynaptic lysosome-related vesicles required for presynaptic biogenesis and synaptic function. Also acts as a regulator of endosome to lysosome trafficking pathways of special significance for host defense. Recruits RUFY1 onto early endosomes regulating endosomes to trans-Golgi network proteins retrieval. Regulates cargo trafficking to lysosomes by binding to PLEKHM1 and recruiting the HOPS subunit VPS41, resulting in functional assembly of the HOPS complex on lysosomal membranes. Plays an important role in cargo delivery to lysosomes for antigen presentation and microbial killing. Directs the intersection of CD1d with lipid antigens in lysosomes, and plays a role in intersecting phagosomes with lysosomes to generate phagolysosomes that kill microbes. Involved in the process of MHC II presentation. Regulates the delivery of antigens to lysosomes and the formation of MHC II-peptide complexes through the recruitment of the HOPS complex to lysosomes allowing the fusion of late endosomes to lysosomes. May play a role in chromosome segregation. This chain is ADP-ribosylation factor-like protein 8B (ARL8B), found in Pongo abelii (Sumatran orangutan).